Reading from the N-terminus, the 490-residue chain is Bifunctional protein HldE (490 aa).

Residues 1-330 (MDRTNIENFL…EAMAHHALEY (330 aa)) are ribokinase. An ATP-binding site is contributed by 205–208 (NRKE). Residue Asp275 is part of the active site. The interval 356-490 (FTNGCFDLLH…ERILDRYEQG (135 aa)) is cytidylyltransferase.

In the N-terminal section; belongs to the carbohydrate kinase PfkB family. The protein in the C-terminal section; belongs to the cytidylyltransferase family. As to quaternary structure, homodimer.

The enzyme catalyses D-glycero-beta-D-manno-heptose 7-phosphate + ATP = D-glycero-beta-D-manno-heptose 1,7-bisphosphate + ADP + H(+). It catalyses the reaction D-glycero-beta-D-manno-heptose 1-phosphate + ATP + H(+) = ADP-D-glycero-beta-D-manno-heptose + diphosphate. It participates in nucleotide-sugar biosynthesis; ADP-L-glycero-beta-D-manno-heptose biosynthesis; ADP-L-glycero-beta-D-manno-heptose from D-glycero-beta-D-manno-heptose 7-phosphate: step 1/4. Its pathway is nucleotide-sugar biosynthesis; ADP-L-glycero-beta-D-manno-heptose biosynthesis; ADP-L-glycero-beta-D-manno-heptose from D-glycero-beta-D-manno-heptose 7-phosphate: step 3/4. In terms of biological role, catalyzes the phosphorylation of D-glycero-D-manno-heptose 7-phosphate at the C-1 position to selectively form D-glycero-beta-D-manno-heptose-1,7-bisphosphate. Functionally, catalyzes the ADP transfer from ATP to D-glycero-beta-D-manno-heptose 1-phosphate, yielding ADP-D-glycero-beta-D-manno-heptose. The chain is Bifunctional protein HldE from Syntrophotalea carbinolica (strain DSM 2380 / NBRC 103641 / GraBd1) (Pelobacter carbinolicus).